A 335-amino-acid polypeptide reads, in one-letter code: Cathepsin B (335 aa).

The first 17 residues, 1-17 (MWRLLATLSCLLVLTSA), serve as a signal peptide directing secretion. Positions 18–79 (RSSLYFPPLS…QRDAFAADVV (62 aa)) are cleaved as a propeptide — activation peptide. Cystine bridges form between Cys93-Cys122, Cys105-Cys150, Cys141-Cys207, Cys142-Cys146, Cys179-Cys211, and Cys187-Cys198. Cys108 is a catalytic residue. The N-linked (GlcNAc...) asparagine glycan is linked to Asn192. Lys220 is subject to N6-acetyllysine. An intrachain disulfide couples Cys227 to Cys331. Active-site residues include His278 and Asn298. Residues 333–335 (HQY) constitute a propeptide that is removed on maturation.

The protein belongs to the peptidase C1 family. In terms of assembly, dimer of a heavy chain and a light chain cross-linked by a disulfide bond. Interacts with SRPX2. Directly interacts with SHKBP1. Expressed in myoblasts, the myotube, fibroblasts and fetal muscle (at protein level). Expressed in the spleen (at protein level).

It localises to the lysosome. The protein localises to the melanosome. The protein resides in the secreted. It is found in the extracellular space. Its subcellular location is the apical cell membrane. It carries out the reaction Hydrolysis of proteins with broad specificity for peptide bonds. Preferentially cleaves -Arg-Arg-|-Xaa bonds in small molecule substrates (thus differing from cathepsin L). In addition to being an endopeptidase, shows peptidyl-dipeptidase activity, liberating C-terminal dipeptides.. Its function is as follows. Thiol protease which is believed to participate in intracellular degradation and turnover of proteins. Cleaves matrix extracellular phosphoglycoprotein MEPE. Involved in the solubilization of cross-linked TG/thyroglobulin in the thyroid follicle lumen. Has also been implicated in tumor invasion and metastasis. The chain is Cathepsin B (CTSB) from Bos taurus (Bovine).